Reading from the N-terminus, the 332-residue chain is MAEGRSSKNSPSGQIDIVQVDGLTVLKIIKHCEEEGSSGDLVQGVLLGLIQDNRLEITNCFPFPSNKAGDDEDDDDVNYQMEVMRRLRAVNIDHLHVGWYQSTYLGSYINRTLLDSQYSYQKSIEESVVLIYDPLRTSQGMLTLKAFRLSDEMMKLYKDGEFSADKLSKAGISFHSMFQEIPLVIKNSSLMNVLLCELDENTPTPSADQFLTLSTGSYLEKNVRVLMESVDELCQDSNKYHNYQRSVIRQQQQKENYLQRRQQENQSRIQRGEDPLPDEDLSKMFKPLPVPSRLDNLLLSEQVNTYCQHVHQFSTQSFGKFFLAQALQDKKE.

Residues 18-153 (VQVDGLTVLK…LKAFRLSDEM (136 aa)) enclose the MPN domain. The disordered stretch occupies residues 251-285 (QQQKENYLQRRQQENQSRIQRGEDPLPDEDLSKMF).

Belongs to the eIF-3 subunit H family. As to quaternary structure, component of the eukaryotic translation initiation factor 3 (eIF-3) complex.

It localises to the cytoplasm. Its function is as follows. Component of the eukaryotic translation initiation factor 3 (eIF-3) complex, which is involved in protein synthesis of a specialized repertoire of mRNAs and, together with other initiation factors, stimulates binding of mRNA and methionyl-tRNAi to the 40S ribosome. The eIF-3 complex specifically targets and initiates translation of a subset of mRNAs involved in cell proliferation. The sequence is that of Eukaryotic translation initiation factor 3 subunit H from Nematostella vectensis (Starlet sea anemone).